The chain runs to 1460 residues: ABC transporter C family member 5 (1460 aa).

Disordered regions lie at residues 1–23 (MKYN…NESE) and 37–68 (GNNN…KKKN). Positions 37–55 (GNNNNDINNNNNINNNNDS) are enriched in low complexity. Helical transmembrane passes span 196–216 (FALS…GPIF), 238–258 (LGYY…IFLY), 320–340 (LIFA…CVGW), 425–445 (LIVV…TVYY), and 456–476 (IFAA…LPYG). In terms of domain architecture, ABC transmembrane type-1 1 spans 196 to 482 (FALSWVHFGL…LPYGYNIYIQ (287 aa)). The disordered stretch occupies residues 537–567 (IKPQTNPPPPRTTPSNDKSSPSGNNSNNEKK). Positions 551–563 (SNDKSSPSGNNSN) are enriched in polar residues. One can recognise an ABC transporter 1 domain in the interval 560 to 783 (NNSNNEKKEV…INSAYGNSSL (224 aa)). 593 to 600 (GPVGSGKS) lines the ATP pocket. 4 helical membrane-spanning segments follow: residues 842-862 (MYYV…GYCI), 922-942 (AGEF…LIIV), 1014-1034 (ILVI…PIII), and 1108-1128 (WLGL…CIFI). Residues 853–1166 (FLIALLGYCI…ATQQLAELET (314 aa)) form the ABC transmembrane type-1 2 domain. The ABC transporter 2 domain maps to 1210 to 1444 (IIFENVVMSY…ENSLFNWLID (235 aa)). 1244-1251 (GRTGSGKS) lines the ATP pocket.

This sequence belongs to the ABC transporter superfamily. ABCC family. Conjugate transporter (TC 3.A.1.208) subfamily.

The protein resides in the membrane. This is ABC transporter C family member 5 (abcC5) from Dictyostelium discoideum (Social amoeba).